Reading from the N-terminus, the 155-residue chain is Ribosomal RNA large subunit methyltransferase H (155 aa).

S-adenosyl-L-methionine-binding positions include leucine 72, glycine 103, and 122-127 (LSPLTL).

It belongs to the RNA methyltransferase RlmH family. In terms of assembly, homodimer.

The protein localises to the cytoplasm. It catalyses the reaction pseudouridine(1915) in 23S rRNA + S-adenosyl-L-methionine = N(3)-methylpseudouridine(1915) in 23S rRNA + S-adenosyl-L-homocysteine + H(+). Functionally, specifically methylates the pseudouridine at position 1915 (m3Psi1915) in 23S rRNA. The polypeptide is Ribosomal RNA large subunit methyltransferase H (Pasteurella multocida (strain Pm70)).